The chain runs to 521 residues: 2-isopropylmalate synthase (521 aa).

The Pyruvate carboxyltransferase domain occupies 5 to 267; it reads VIIFDTTLRD…HTNIKHQEIH (263 aa). Mn(2+) contacts are provided by Asp-14, His-202, His-204, and Asn-238. A regulatory domain region spans residues 392–521; the sequence is KLNYLSVQSG…FAQKTVMETL (130 aa).

This sequence belongs to the alpha-IPM synthase/homocitrate synthase family. LeuA type 1 subfamily. Homodimer. Mn(2+) serves as cofactor.

The protein resides in the cytoplasm. It carries out the reaction 3-methyl-2-oxobutanoate + acetyl-CoA + H2O = (2S)-2-isopropylmalate + CoA + H(+). It functions in the pathway amino-acid biosynthesis; L-leucine biosynthesis; L-leucine from 3-methyl-2-oxobutanoate: step 1/4. Functionally, catalyzes the condensation of the acetyl group of acetyl-CoA with 3-methyl-2-oxobutanoate (2-ketoisovalerate) to form 3-carboxy-3-hydroxy-4-methylpentanoate (2-isopropylmalate). The polypeptide is 2-isopropylmalate synthase (Tolumonas auensis (strain DSM 9187 / NBRC 110442 / TA 4)).